The sequence spans 623 residues: MATPSRTSWADVADADPAPAPAPAANGPARPDRSSYVPPHLRNRGASSGGGAAAPPPSSSSSSAPPPRAAPGLLAPRPAAAGMGRMGGGGGGGGFGGPRRWDREPNPFGNDGDAAAGAGDEPEVFDAHQNTGINFDAYEDIPVETSGREVPPPVGTFAEIDLGQALNDNIRRCKYVRPTPVQRYAIPISLAGRDLMACAQTGSGKTAAFCFPIISGIMRGPPAQRPQRGGMRTACPLALILSPTRELSMQIHEEARKFSYQTGVRVVVAYGGAPINQQLRDLERGVDILVATPGRLVDLLERARVSLQSIRYLALDEADRMLDMGFEPQVRRIVEQMDMPPPGARQTMLFSATFPKEIQRMASDFLENYIFLAVGRVGSSTDLIVQRVEFVQEADKRSHLMDLLHAQRDSATPGKPTLTLVFVETKRGADSLEHWLCMNGFPATSIHGDRNQQEREYALRSFKSGHTPILVATDVAARGLDIPHVAHVVNFDLPNDIDDYVHRIGRTGRAGKSGLATAFFNENNSSMARSLAELMQESNQEVPAWLSRYAARPSYGGGGGRNRRSGGGSRFGGRDFRRDSSSGRGGGDYYGGGSSGGAGGYGGSSAYGGGGYGGGAGAPSAWD.

Residues 1–120 form a disordered region; the sequence is MATPSRTSWA…DGDAAAGAGD (120 aa). Residues 10–29 show a composition bias toward low complexity; it reads ADVADADPAPAPAPAANGPA. The segment covering 54 to 69 has biased composition (pro residues); it reads APPPSSSSSSAPPPRA. The span at 70-83 shows a compositional bias: low complexity; it reads APGLLAPRPAAAGM. Gly residues predominate over residues 84–97; it reads GRMGGGGGGGGFGG. The Q motif motif lies at 155 to 183; that stretch reads GTFAEIDLGQALNDNIRRCKYVRPTPVQR. One can recognise a Helicase ATP-binding domain in the interval 186-372; sequence IPISLAGRDL…SDFLENYIFL (187 aa). 199-206 serves as a coordination point for ATP; sequence AQTGSGKT. Positions 316 to 319 match the DEAD box motif; that stretch reads DEAD. The Helicase C-terminal domain occupies 399–550; it reads HLMDLLHAQR…EVPAWLSRYA (152 aa). The interval 553 to 595 is disordered; that stretch reads PSYGGGGGRNRRSGGGSRFGGRDFRRDSSSGRGGGDYYGGGSS. Positions 555-571 are enriched in gly residues; that stretch reads YGGGGGRNRRSGGGSRF. Residues 572-581 show a composition bias toward basic and acidic residues; sequence GGRDFRRDSS. Residues 583–595 are compositionally biased toward gly residues; sequence GRGGGDYYGGGSS.

It belongs to the DEAD box helicase family. DDX3/DED1 subfamily.

It catalyses the reaction ATP + H2O = ADP + phosphate + H(+). In Oryza sativa subsp. japonica (Rice), this protein is DEAD-box ATP-dependent RNA helicase 52C.